Reading from the N-terminus, the 333-residue chain is Taste receptor type 2 member 110 (333 aa).

Topologically, residues 1–13 (MFSQIISTSDIFT) are extracellular. Residues 14 to 34 (FTIILFVELVIGILGNGFIAL) traverse the membrane as a helical segment. Over 35 to 60 (VNIMDWTKRRSISSADQILTALAITR) the chain is Cytoplasmic. Residues 61 to 81 (FLYVWFMIICILLFMLCPHLL) traverse the membrane as a helical segment. Topologically, residues 82–89 (TRSEIVTS) are extracellular. Residues 90–110 (IGIIWIVNNHFSVWLATCLGV) traverse the membrane as a helical segment. Residues 111-133 (FYFLKIANFSNSLFLYLKWRVKK) lie on the Cytoplasmic side of the membrane. The chain crosses the membrane as a helical span at residues 134-154 (VVLMIIQVSMIFLILNLLSLS). The Extracellular portion of the chain corresponds to 155–205 (MYDQFSIDVYEGNTSYNLGDSTPFPTISLFINSSKVFVITNSSHIFLPINS). Asn-186 and Asn-195 each carry an N-linked (GlcNAc...) asparagine glycan. A helical transmembrane segment spans residues 206–226 (LFMLIPFTVSLVAFLMLIFSL). The Cytoplasmic portion of the chain corresponds to 227–255 (WKHHKKMQVNAKPPRDASTMAHIKALQTG). The helical transmembrane segment at 256-276 (FSFLLLYAVYLLFIVIGMLSL) threads the bilayer. Topologically, residues 277-283 (RLIGGKL) are extracellular. A helical transmembrane segment spans residues 284-304 (ILLFDHISGIGFPISHSFVLI). Over 305–333 (LGNNKLRQASLSVLHCLRCRSKDMDTMGP) the chain is Cytoplasmic.

Belongs to the G-protein coupled receptor T2R family.

Its subcellular location is the membrane. Functionally, gustducin-coupled receptor implicated in the perception of bitter compounds in the oral cavity and the gastrointestinal tract. Signals through PLCB2 and the calcium-regulated cation channel TRPM5. In Mus musculus (Mouse), this protein is Taste receptor type 2 member 110.